The following is a 221-amino-acid chain: Uracil-DNA glycosylase 1 (221 aa).

Residue Asp-61 is the Proton acceptor of the active site.

This sequence belongs to the uracil-DNA glycosylase (UDG) superfamily. UNG family.

The protein resides in the cytoplasm. The enzyme catalyses Hydrolyzes single-stranded DNA or mismatched double-stranded DNA and polynucleotides, releasing free uracil.. Excises uracil residues from the DNA which can arise as a result of misincorporation of dUMP residues by DNA polymerase or due to deamination of cytosine. This Listeria monocytogenes serovar 1/2a (strain ATCC BAA-679 / EGD-e) protein is Uracil-DNA glycosylase 1.